The following is a 405-amino-acid chain: Protein held out wings (405 aa).

The KH domain occupies 142 to 210 (YVPVREHPDF…HLSDDLHVLI (69 aa)).

As to quaternary structure, homodimer. Interacts with Sxl; promoting nuclear retention of msl-2 transcripts. During embryogenesis, expression is seen in mesodermal precursors of somatic, visceral and pharyngeal muscle. Later in embryogenesis, expression is restricted to heart and muscle attachment sites of the epidermis. During onset of metamorphosis, expression is seen in muscle and muscle attachment cells.

It is found in the nucleus. Functionally, RNA-binding protein involved in muscle development and dosage compensation. Vital role in steroid regulation of muscle development and to control heart rate. Required during embryogenesis, in late stages of somatic muscle development, for myotube migration and during metamorphosis for muscle reorganization. Required for integrin-mediated cell-adhesion in wing blade. Together with Sxl, acts as an inhibitor of dosage compensation in females by preventing production of msl-2 protein, an essential component of the MSL complex. Specifically binds to the 5'-UTR of msl-2 transcripts and cooperates with Sxl to promote nuclear retention of msl-2 mRNAs. The polypeptide is Protein held out wings (how) (Drosophila melanogaster (Fruit fly)).